A 316-amino-acid polypeptide reads, in one-letter code: Ribosomal RNA small subunit methyltransferase H (316 aa).

S-adenosyl-L-methionine-binding positions include 35–37 (AGH), Asp55, Phe84, Asp105, and Gln112.

This sequence belongs to the methyltransferase superfamily. RsmH family.

The protein resides in the cytoplasm. It catalyses the reaction cytidine(1402) in 16S rRNA + S-adenosyl-L-methionine = N(4)-methylcytidine(1402) in 16S rRNA + S-adenosyl-L-homocysteine + H(+). Its function is as follows. Specifically methylates the N4 position of cytidine in position 1402 (C1402) of 16S rRNA. This Streptococcus thermophilus (strain ATCC BAA-250 / LMG 18311) protein is Ribosomal RNA small subunit methyltransferase H.